Consider the following 196-residue polypeptide: UMP-CMP kinase (196 aa).

13–18 provides a ligand contact to ATP; it reads GAGKGT. The tract at residues 33–63 is NMP; that stretch reads SAGDLLREERSRTDSEFGQLIDSYIKEGKIV. A ribonucleoside 5'-phosphate-binding positions include R39, 61–63, and 93–96; these read KIV and GFPR. N100 provides a ligand contact to CMP. The segment at 133-143 is LID; it reads ERGKSSGRTDD. R134 contributes to the ATP binding site. A ribonucleoside 5'-phosphate is bound by residues R140 and R151. Residue R179 participates in ATP binding.

Belongs to the adenylate kinase family. UMP-CMP kinase subfamily. Monomer. Mg(2+) is required as a cofactor.

Its subcellular location is the nucleus. The protein localises to the cytoplasm. The enzyme catalyses CMP + ATP = CDP + ADP. The catalysed reaction is dCMP + ATP = dCDP + ADP. It catalyses the reaction UMP + ATP = UDP + ADP. It carries out the reaction a 2'-deoxyribonucleoside 5'-diphosphate + ATP = a 2'-deoxyribonucleoside 5'-triphosphate + ADP. The enzyme catalyses a ribonucleoside 5'-diphosphate + ATP = a ribonucleoside 5'-triphosphate + ADP. Functionally, catalyzes the phosphorylation of pyrimidine nucleoside monophosphates at the expense of ATP. Plays an important role in de novo pyrimidine nucleotide biosynthesis. Has preference for UMP and CMP as phosphate acceptors. Also displays broad nucleoside diphosphate kinase activity. This Danio rerio (Zebrafish) protein is UMP-CMP kinase (cmpk).